The chain runs to 291 residues: Feruloyl esterase B (291 aa).

An N-terminal signal peptide occupies residues 1–18; the sequence is MLVRSFLGFAVLAATCLA. Asn-117 carries an N-linked (GlcNAc...) asparagine glycan. Ser-136 serves as the catalytic Charge relay system. Residue Asn-179 is glycosylated (N-linked (GlcNAc...) asparagine).

Belongs to the carbohydrate esterase 1 (CE1) family. Feruloyl esterase type B subfamily.

The protein resides in the secreted. It catalyses the reaction feruloyl-polysaccharide + H2O = ferulate + polysaccharide.. In terms of biological role, feruloyl esterase which acts in synergy with xylanases in degradation of plant cell walls. Hydrolyzes the ester linkage of hydroxycinnamic acids (ferulic acid (FA) and p-coumaric acid) and diferulates present in plant cell walls. Is active on substrates containing ferulic acid ester linked to the C-5 and C-2 linkages of arabinofuranose, while it was found capable of de-esterifying acetylated glucuronoxylans. Efficiently releases ferulic acid (FA) from destarched wheat bran when incubated with an M3 xylanase. This Thermothelomyces thermophilus (strain ATCC 42464 / BCRC 31852 / DSM 1799) (Sporotrichum thermophile) protein is Feruloyl esterase B (Fae1a).